A 2335-amino-acid polypeptide reads, in one-letter code: uncharacterized protein (2335 aa).

6 helical membrane passes run 114–134, 148–167, 172–194, 214–234, 255–275, and 307–327; these read FMIGLLNSVFLCLPTSIAHII, FISGLGTIAGNIVWIGSIVF, VVIPWLSLDLFRAFLGFVLIVKY, IFFLTFLLSFTEQTTIYPFLS, EFGFVHLCYLLGILVGSLSLL, and FVNLTFLYLTMICAISNIAYF. Polar residues predominate over residues 1043-1052; it reads ATSESISFNQ. Residues 1043-1064 are disordered; the sequence is ATSESISFNQTKEKSNSTLGRL. 2 coiled-coil regions span residues 1174–1202 and 1417–1447; these read VTLKKEKYENKKQKHERYLKNRLERMKEA and KKRENALSKRRKIRKTLKRLRNQNTSTEKIV. Residues 1458 to 1471 are compositionally biased toward polar residues; that stretch reads QTSQLTKNSFNPSR. Positions 1458-1479 are disordered; it reads QTSQLTKNSFNPSRQKTDKNLE. A helical transmembrane segment spans residues 2086–2106; it reads VWFPSGSLSQQVLPVHYIYVF. The disordered stretch occupies residues 2200–2222; the sequence is KQEKRILKSKQRRKITDSKQSTE.

This sequence belongs to the ycf78 family.

It localises to the plastid. It is found in the chloroplast membrane. This is an uncharacterized protein from Tetradesmus obliquus (Green alga).